The following is a 62-amino-acid chain: Conotoxin TsMLCL-02 (62 aa).

The first 19 residues, 1-19 (MLCLPVFIILLLLASPAAP), serve as a signal peptide directing secretion. The propeptide occupies 20-54 (NPLERRIQSDLIRAALEDADMKTEKGILSSIMGTL).

It belongs to the conotoxin T superfamily. Expressed by the venom duct.

The protein resides in the secreted. The chain is Conotoxin TsMLCL-02 from Conus tessulatus (Tessellate cone).